A 40-amino-acid chain; its full sequence is MKLKSKLFVICLAAAAIFTAAGVSANAEALDFHVTERGMT.

Residues 1–35 constitute a propeptide that is removed on maturation; sequence MKLKSKLFVICLAAAAIFTAAGVSANAEALDFHVT.

The protein belongs to the Phr family. In terms of assembly, interacts with RapC and inhibits its interaction with ComA. In terms of processing, secreted with a propeptide domain, which is cleaved in the cell wall by the secreted serine proteases subtilisin, Epr and Vpr to produce a mature signaling peptide. Contains a predicted signal peptide cleavage site in the N-terminal region, however the propeptide is probably subject to only one processing event, at the N-terminal end of the mature peptide.

The protein localises to the secreted. It localises to the cytoplasm. Its subcellular location is the host cell. In terms of biological role, signaling molecule that serves as a cell density signal for both genetic competence development and sporulation. Secreted during production, but the mature peptide acts intracellularly, indicating that it needs to be imported into the cell to function. At low concentrations, CSF stimulates expression of the genes controlled by ComA, a transcriptional factor that regulates the development of genetic competence. It includes the srfA operon, which encodes a small protein, ComS, required for competence development, and the surfactin biosynthetic enzymes. Acts by inhibiting RapC, which regulates the activity of ComA. At high concentrations, it inhibits expression of those same ComA-controlled genes, maybe by inhibiting activity of the kinase ComP. In addition, high concentrations of CSF can stimulate sporulation under some conditions. Also inhibits RapB activity, with lower efficiency, but does not act on RapA. Is probably involved in the quorum sensing control of sporulation. CSF is a species-specific signaling molecule that partially compensates for the lack of ComX-mediated communication between different strains of B.subtilis. Its function is as follows. B.subtilis is a well-characterized soil and water saprophyte, but it is also found in enteric flora of many species, including humans. In this environment, CSF can be transported into human intestinal epithelia via OCTN2, a host cell membrane transporter, and can induce cytoprotective heat shock proteins contributing to intestinal homeostasis. Functionally, in addition, in non-domesticated swarming strains of B.subtilis, the residual propeptide exposed on the exterior of the cytoplasmic membrane may have an extracellular role in swarming. This function is probably not dependent on CSF. The polypeptide is Competence and sporulation stimulating factor (Bacillus subtilis (strain 168)).